The following is a 264-amino-acid chain: Carbonic anhydrase 7 (264 aa).

Residues 5–262 (HCWGYGQDDG…LKGRVVKASF (258 aa)) enclose the Alpha-carbonic anhydrase domain. Residue H66 is the Proton donor/acceptor of the active site. Zn(2+)-binding residues include H96, H98, and H121. 201–202 (TT) lines the substrate pocket.

This sequence belongs to the alpha-carbonic anhydrase family. Zn(2+) is required as a cofactor.

It is found in the cytoplasm. It carries out the reaction hydrogencarbonate + H(+) = CO2 + H2O. Functionally, reversible hydration of carbon dioxide. This Mus musculus (Mouse) protein is Carbonic anhydrase 7 (Ca7).